A 138-amino-acid polypeptide reads, in one-letter code: Protein FAM136A (138 aa).

Residue alanine 2 is modified to N-acetylalanine. Phosphothreonine is present on residues threonine 124 and threonine 126.

The protein belongs to the FAM136 family.

The polypeptide is Protein FAM136A (Fam136a) (Rattus norvegicus (Rat)).